A 269-amino-acid polypeptide reads, in one-letter code: ATP synthase subunit delta (269 aa).

The protein belongs to the ATPase delta chain family. F-type ATPases have 2 components, F(1) - the catalytic core - and F(0) - the membrane proton channel. F(1) has five subunits: alpha(3), beta(3), gamma(1), delta(1), epsilon(1). F(0) has three main subunits: a(1), b(2) and c(10-14). The alpha and beta chains form an alternating ring which encloses part of the gamma chain. F(1) is attached to F(0) by a central stalk formed by the gamma and epsilon chains, while a peripheral stalk is formed by the delta and b chains.

Its subcellular location is the cell membrane. In terms of biological role, f(1)F(0) ATP synthase produces ATP from ADP in the presence of a proton or sodium gradient. F-type ATPases consist of two structural domains, F(1) containing the extramembraneous catalytic core and F(0) containing the membrane proton channel, linked together by a central stalk and a peripheral stalk. During catalysis, ATP synthesis in the catalytic domain of F(1) is coupled via a rotary mechanism of the central stalk subunits to proton translocation. This protein is part of the stalk that links CF(0) to CF(1). It either transmits conformational changes from CF(0) to CF(1) or is implicated in proton conduction. This chain is ATP synthase subunit delta, found in Thermobifida fusca (strain YX).